The chain runs to 98 residues: Citrate lyase acyl carrier protein (98 aa).

Serine 14 carries the O-(phosphoribosyl dephospho-coenzyme A)serine modification.

The protein belongs to the CitD family. In terms of assembly, oligomer with a subunit composition of (alpha,beta,gamma)6.

The protein localises to the cytoplasm. Functionally, covalent carrier of the coenzyme of citrate lyase. This chain is Citrate lyase acyl carrier protein, found in Escherichia coli O81 (strain ED1a).